The sequence spans 160 residues: Phosphopantetheine adenylyltransferase (160 aa).

A substrate-binding site is contributed by threonine 10. ATP contacts are provided by residues 10-11 (TF) and histidine 18. Positions 42, 74, and 88 each coordinate substrate. ATP contacts are provided by residues 89–91 (GLR), glutamate 99, and 124–130 (NSFISST).

It belongs to the bacterial CoaD family. In terms of assembly, homohexamer. Mg(2+) is required as a cofactor.

The protein resides in the cytoplasm. The enzyme catalyses (R)-4'-phosphopantetheine + ATP + H(+) = 3'-dephospho-CoA + diphosphate. Its pathway is cofactor biosynthesis; coenzyme A biosynthesis; CoA from (R)-pantothenate: step 4/5. Functionally, reversibly transfers an adenylyl group from ATP to 4'-phosphopantetheine, yielding dephospho-CoA (dPCoA) and pyrophosphate. This is Phosphopantetheine adenylyltransferase from Aeromonas hydrophila subsp. hydrophila (strain ATCC 7966 / DSM 30187 / BCRC 13018 / CCUG 14551 / JCM 1027 / KCTC 2358 / NCIMB 9240 / NCTC 8049).